A 332-amino-acid polypeptide reads, in one-letter code: Long form salivary protein D7L1 (332 aa).

Positions 1 to 21 (MHSPKSFLLLAVVFVALRVTA) are cleaved as a signal peptide. 2 cysteine pairs are disulfide-bonded: Cys40-Cys77 and Cys73-Cys133. Trp61 contributes to the leukotriene E4 binding site. Lys176 is a binding site for leukotriene E4. Disulfide bonds link Cys184–Cys219, Cys200–Cys331, and Cys259–Cys278. Residues Glu185 and Arg203 each contribute to the noradrenaline site. Residues Asp294 and Glu297 each coordinate noradrenaline.

The protein belongs to the PBP/GOBP family. In terms of tissue distribution, female mosquito salivary gland (at protein level).

The protein localises to the secreted. Functionally, modulates blood feeding of female mosquitoes on vertebrate species by binding and sequestering different mediators involved in the host response, such as biogenic amines and eicosanoids. Binds dopamine, serotonin, histamine, tryptamine, adrenaline, noradrenaline, leukotriene B4, leukotriene C4, leukotriene D4, leukotriene E4 and U-46619, a stable analog of thromboxane A2. Inhibits platelet aggregation induced by serotonin and low doses of thromboxane A2 analog U-46619 but not by high doses of U-46619, collagen or ADP. Prevents leukocyte recruitment. The polypeptide is Long form salivary protein D7L1 (Aedes albopictus (Asian tiger mosquito)).